Reading from the N-terminus, the 370-residue chain is UPF0284 protein PCC7424_2681 (370 aa).

Belongs to the UPF0284 family.

This chain is UPF0284 protein PCC7424_2681, found in Gloeothece citriformis (strain PCC 7424) (Cyanothece sp. (strain PCC 7424)).